Here is a 69-residue protein sequence, read N- to C-terminus: Probable cold shock protein y4cH (69 aa).

Residues 5–65 (GTVKWFNATK…DRKSGKMSAD (61 aa)) enclose the CSD domain.

The protein localises to the cytoplasm. The sequence is that of Probable cold shock protein y4cH from Sinorhizobium fredii (strain NBRC 101917 / NGR234).